Consider the following 256-residue polypeptide: Ribosomal RNA small subunit methyltransferase A (256 aa).

S-adenosyl-L-methionine is bound by residues His-12, Leu-14, Gly-39, Glu-60, Asp-83, and Asn-101.

The protein belongs to the class I-like SAM-binding methyltransferase superfamily. rRNA adenine N(6)-methyltransferase family. RsmA subfamily.

The protein resides in the cytoplasm. It carries out the reaction adenosine(1518)/adenosine(1519) in 16S rRNA + 4 S-adenosyl-L-methionine = N(6)-dimethyladenosine(1518)/N(6)-dimethyladenosine(1519) in 16S rRNA + 4 S-adenosyl-L-homocysteine + 4 H(+). Specifically dimethylates two adjacent adenosines (A1518 and A1519) in the loop of a conserved hairpin near the 3'-end of 16S rRNA in the 30S particle. May play a critical role in biogenesis of 30S subunits. This chain is Ribosomal RNA small subunit methyltransferase A, found in Nitrosomonas eutropha (strain DSM 101675 / C91 / Nm57).